We begin with the raw amino-acid sequence, 183 residues long: Small ribosomal subunit protein uS4c (183 aa).

The 62-residue stretch at 82-143 (MRLDNILFRL…KQRSKALIQN (62 aa)) folds into the S4 RNA-binding domain.

Belongs to the universal ribosomal protein uS4 family. Part of the 30S ribosomal subunit. Contacts protein S5. The interaction surface between S4 and S5 is involved in control of translational fidelity.

The protein resides in the plastid. Its subcellular location is the chloroplast. In terms of biological role, one of the primary rRNA binding proteins, it binds directly to 16S rRNA where it nucleates assembly of the body of the 30S subunit. Functionally, with S5 and S12 plays an important role in translational accuracy. The protein is Small ribosomal subunit protein uS4c (rps4) of Freesia sp. (strain Lejeune 1997).